The following is a 331-amino-acid chain: Tungstate uptake system ATP-binding protein TupC (331 aa).

The ABC transporter domain maps to 2–230 (IEISNLFFNY…NQGVKFCNFI (229 aa)). ATP is bound at residue 34–41 (GANGSGKS).

Belongs to the ABC transporter superfamily. The complex is composed of two ATP-binding proteins (TupC), two transmembrane proteins (TupB) and a solute-binding protein (TupA).

The catalysed reaction is tungstate(in) + ATP + H2O = tungstate(out) + ADP + phosphate + H(+). Functionally, part of an ABC transporter complex involved in ultra-high affinity tungstate uptake. Probably responsible for energy coupling to the transport system. The sequence is that of Tungstate uptake system ATP-binding protein TupC from Campylobacter jejuni subsp. jejuni serotype O:2 (strain ATCC 700819 / NCTC 11168).